Consider the following 60-residue polypeptide: Large ribosomal subunit protein bL32 (60 aa).

This sequence belongs to the bacterial ribosomal protein bL32 family.

The polypeptide is Large ribosomal subunit protein bL32 (Kosmotoga olearia (strain ATCC BAA-1733 / DSM 21960 / TBF 19.5.1)).